Reading from the N-terminus, the 142-residue chain is Matrix protein (142 aa).

Residues 64-66 and Ala117 each bind GMP; that span reads DVE.

In terms of assembly, homooligomer. Homotetramer. Interacts with phosphoprotein P. Binds to ssRNA. Not glycosylated.

Its subcellular location is the virion. The protein localises to the host cytoplasm. It localises to the host cell membrane. Plays a crucial role in virion assembly and budding. The chain is Matrix protein (M) from Bos taurus (Bovine).